The following is a 593-amino-acid chain: Kelch-like protein 2 (593 aa).

Residues 1-29 (METPPLPPACTKQGHQKPLDSKDENPEKH) form a disordered region. Residues 17–29 (KPLDSKDENPEKH) are compositionally biased toward basic and acidic residues. Residues 56 to 123 (CDVTIVAEDM…VYTAEIQVTE (68 aa)) form the BTB domain. Kelch repeat units follow at residues 308–353 (LMVV…YMAG), 354–400 (LVFA…VLNG), 402–447 (LYAV…VVGG), 449–496 (LYAV…VLNN), 497–543 (LLYA…AVNG), and 545–591 (LYVV…VIDK).

Component of the BCR(KLHL2) E3 ubiquitin ligase complex, at least composed of CUL3 and KLHL2 and RBX1. Binds actin. Interacts with KLHL12. Interacts (via N-terminus) with FYN (via SH3 domain).

Its subcellular location is the cytoplasm. It is found in the cytoskeleton. The protein resides in the cell projection. The protein localises to the ruffle. It localises to the lamellipodium. Its subcellular location is the cytosol. Its pathway is protein modification; protein ubiquitination. In terms of biological role, substrate-specific adapter of a BCR (BTB-CUL3-RBX1) E3 ubiquitin ligase complex that mediates the ubiquitination of target proteins, such as NPTXR, WNK1, WNK3 and WNK4, leading most often to their proteasomal degradation. The BCR(KLHL2) complex catalyzes ubiquitination and degradation of NPTXR. Responsible for degradative ubiquitination of the WNK kinases WNK1, WNK3 and WNK4. Plays a role in the reorganization of the actin cytoskeleton. Promotes growth of cell projections in oligodendrocyte precursors. In Mus musculus (Mouse), this protein is Kelch-like protein 2.